The following is a 211-amino-acid chain: Thymidylate kinase (211 aa).

ATP is bound at residue 7–14; it reads GMDGSGKT.

It belongs to the thymidylate kinase family.

It carries out the reaction dTMP + ATP = dTDP + ADP. Phosphorylation of dTMP to form dTDP in both de novo and salvage pathways of dTTP synthesis. This Mesoplasma florum (strain ATCC 33453 / NBRC 100688 / NCTC 11704 / L1) (Acholeplasma florum) protein is Thymidylate kinase.